Here is a 391-residue protein sequence, read N- to C-terminus: Succinyl-diaminopimelate desuccinylase (391 aa).

His-78 contacts Zn(2+). Asp-80 is a catalytic residue. Asp-111 provides a ligand contact to Zn(2+). Glu-145 serves as the catalytic Proton acceptor. Residues Glu-146, Glu-174, and His-360 each coordinate Zn(2+).

It belongs to the peptidase M20A family. DapE subfamily. In terms of assembly, homodimer. Zn(2+) is required as a cofactor. Requires Co(2+) as cofactor.

It catalyses the reaction N-succinyl-(2S,6S)-2,6-diaminopimelate + H2O = (2S,6S)-2,6-diaminopimelate + succinate. Its pathway is amino-acid biosynthesis; L-lysine biosynthesis via DAP pathway; LL-2,6-diaminopimelate from (S)-tetrahydrodipicolinate (succinylase route): step 3/3. Functionally, catalyzes the hydrolysis of N-succinyl-L,L-diaminopimelic acid (SDAP), forming succinate and LL-2,6-diaminopimelate (DAP), an intermediate involved in the bacterial biosynthesis of lysine and meso-diaminopimelic acid, an essential component of bacterial cell walls. The chain is Succinyl-diaminopimelate desuccinylase from Acidovorax ebreus (strain TPSY) (Diaphorobacter sp. (strain TPSY)).